The sequence spans 346 residues: Tubulin-specific chaperone C (346 aa).

Residue methionine 1 is modified to N-acetylmethionine. The segment at 1-26 is disordered; sequence MESVSCSAAAVRTGDMESQRDLSLVP. A phosphoserine mark is found at serine 80 and serine 168. Residues 140–171 are disordered; it reads KTRGKDAASSTKVDAAPGIPPAVESIQDSPLP. The C-CAP/cofactor C-like domain maps to 171–323; the sequence is PKKAEGDLGP…NWNDVDDFNW (153 aa).

It belongs to the TBCC family. As to quaternary structure, supercomplex made of cofactors A to E. Cofactors A and D function by capturing and stabilizing tubulin in a quasi-native conformation. Cofactor E binds to the cofactor D-tubulin complex; interaction with cofactor C then causes the release of tubulin polypeptides that are committed to the native state. As to expression, expressed in the retina. Expressed in the rod and cone photoreceptors, extending from the inner segments (IS), through the outer nuclear layer (ONL) and into the synapses in the outer plexiform layer (OPL). Strongly expressed to the photoreceptor connecting cilium at the tips of the IS (at protein level).

The protein resides in the cytoplasm. Tubulin-folding protein; involved in the final step of the tubulin folding pathway. The chain is Tubulin-specific chaperone C (TBCC) from Homo sapiens (Human).